A 154-amino-acid chain; its full sequence is MTQDHKLQVEAIRCGTVIDHIPAQVGFKLLSLFKLTETDQRITIGLNLPSNRLGKKDLIKIENTFLTEQQANQLAMYAPNATVNCIENYEVVKKLPINLPKCIDNVLVCPNSNCISHNEPVESSFRVKVTVEDVVLTCKYCEKEFDRNVVILND.

Positions 109, 114, 138, and 141 each coordinate Zn(2+).

The protein belongs to the PyrI family. In terms of assembly, contains catalytic and regulatory chains. It depends on Zn(2+) as a cofactor.

Its function is as follows. Involved in allosteric regulation of aspartate carbamoyltransferase. The chain is Aspartate carbamoyltransferase regulatory chain from Photorhabdus laumondii subsp. laumondii (strain DSM 15139 / CIP 105565 / TT01) (Photorhabdus luminescens subsp. laumondii).